A 330-amino-acid chain; its full sequence is Quinone oxidoreductase (330 aa).

Ala-2 is modified (N-acetylalanine). The residue at position 23 (Lys-23) is an N6-acetyllysine. Residues Tyr-53, 158 to 161 (SGGV), Gly-181, His-200, Asn-229, 246 to 249 (VGSK), and 269 to 271 (VTL) contribute to the NADP(+) site. Ser-248 carries the post-translational modification Phosphoserine.

It belongs to the zinc-containing alcohol dehydrogenase family. Quinone oxidoreductase subfamily. Homotetramer.

The protein resides in the cytoplasm. The enzyme catalyses 2 a quinone + NADPH + H(+) = 2 a 1,4-benzosemiquinone + NADP(+). Functionally, does not have alcohol dehydrogenase activity. Binds NADP and acts through a one-electron transfer process. Orthoquinones, such as 1,2-naphthoquinone or 9,10-phenanthrenequinone, are the best substrates (in vitro). May act in the detoxification of xenobiotics. Interacts with (AU)-rich elements (ARE) in the 3'-UTR of target mRNA species and enhances their stability. NADPH binding interferes with mRNA binding. In Lama guanicoe (Guanaco), this protein is Quinone oxidoreductase (CRYZ).